The primary structure comprises 55 residues: Spermatid nuclear transition protein 1 (55 aa).

A compositionally biased stretch (basic residues) spans 1-42 (MSTSRKLKSHGMRRGKNRAPHKGVKRGGSKRKYRKGSLKSRK). The segment at 1–55 (MSTSRKLKSHGMRRGKNRAPHKGVKRGGSKRKYRKGSLKSRKRCDDANRNYRSHL) is disordered. Serine 9, serine 37, and serine 40 each carry phosphoserine.

This sequence belongs to the nuclear transition protein 1 family. Testis.

It localises to the nucleus. It is found in the chromosome. In terms of biological role, plays a key role in the replacement of histones to protamine in the elongating spermatids of mammals. In condensing spermatids, loaded onto the nucleosomes, where it promotes the recruitment and processing of protamines, which are responsible for histone eviction. This chain is Spermatid nuclear transition protein 1 (TNP1), found in Sus scrofa (Pig).